The sequence spans 134 residues: S-protein homolog 31 (134 aa).

The N-terminal stretch at 1-21 (MKILSVFLFVFSIYIFGHVSG) is a signal peptide. The N-linked (GlcNAc...) asparagine glycan is linked to Asn-87.

Belongs to the plant self-incompatibility (S1) protein family.

Its subcellular location is the secreted. This is S-protein homolog 31 from Arabidopsis thaliana (Mouse-ear cress).